A 553-amino-acid polypeptide reads, in one-letter code: Probable bifunctional riboflavin biosynthesis protein RIBA 2, chloroplastic (553 aa).

Residues 1–56 constitute a chloroplast transit peptide; sequence MASISPTSSSVAALRGHPVQFVKGGAVSKEAKGSISFSPVANSNNANVKFTGLRVA. Residues 62 to 336 are DHBP synthase; it reads DGAFPGDGYS…IADLIRYRRK (275 aa). Residues 70–90 are disordered; the sequence is YSGNDNTVLPKSTSVRGQDYP. Polar residues predominate over residues 72-85; it reads GNDNTVLPKSTSVR. Residues 160–161, Asp-165, 275–279, and Glu-299 each bind D-ribulose 5-phosphate; these read RE and RAGHT. Residue Glu-161 coordinates Mg(2+). Residue His-278 participates in Mg(2+) binding. The interval 337–553 is GTP cyclohydrolase II; it reads RDRLVERSSV…TGSNGAKGEH (217 aa). 387–391 lines the GTP pocket; sequence RVHSE. Zn(2+) contacts are provided by Cys-392, Cys-403, and Cys-405. Residues Gln-408, 431–433, and Thr-453 each bind GTP; that span reads EGR. Asp-465 acts as the Proton acceptor; for GTP cyclohydrolase activity in catalysis. The active-site Nucleophile; for GTP cyclohydrolase activity is the Arg-467. The GTP site is built by Thr-488 and Lys-493.

It in the N-terminal section; belongs to the DHBP synthase family. The protein in the C-terminal section; belongs to the GTP cyclohydrolase II family. The cofactor is Mg(2+). Mn(2+) serves as cofactor. It depends on Zn(2+) as a cofactor.

Its subcellular location is the plastid. The protein resides in the chloroplast. The catalysed reaction is D-ribulose 5-phosphate = (2S)-2-hydroxy-3-oxobutyl phosphate + formate + H(+). The enzyme catalyses GTP + 4 H2O = 2,5-diamino-6-hydroxy-4-(5-phosphoribosylamino)-pyrimidine + formate + 2 phosphate + 3 H(+). Its pathway is cofactor biosynthesis; riboflavin biosynthesis; 2-hydroxy-3-oxobutyl phosphate from D-ribulose 5-phosphate: step 1/1. It functions in the pathway cofactor biosynthesis; riboflavin biosynthesis; 5-amino-6-(D-ribitylamino)uracil from GTP: step 1/4. In terms of biological role, involved in riboflavin biosynthesis. Catalyzes both the conversion of D-ribulose 5-phosphate to formate and 3,4-dihydroxy-2-butanone 4-phosphate and the conversion of GTP to 2,5-diamino-6-ribosylamino-4(3H)-pyrimidinone 5'-phosphate (DARP), formate and pyrophosphate. The protein is Probable bifunctional riboflavin biosynthesis protein RIBA 2, chloroplastic (RIBA2) of Oryza sativa subsp. japonica (Rice).